We begin with the raw amino-acid sequence, 91 residues long: UPF0358 protein SERP0701 (91 aa).

It belongs to the UPF0358 family.

The sequence is that of UPF0358 protein SERP0701 from Staphylococcus epidermidis (strain ATCC 35984 / DSM 28319 / BCRC 17069 / CCUG 31568 / BM 3577 / RP62A).